The chain runs to 271 residues: Type III pantothenate kinase (271 aa).

Position 5–12 (5–12 (DISNSVTK)) interacts with ATP. Residues Y85 and 92–95 (GADR) each bind substrate. D94 acts as the Proton acceptor in catalysis. Residue D114 participates in K(+) binding. Residue T117 coordinates ATP. T169 serves as a coordination point for substrate.

Belongs to the type III pantothenate kinase family. As to quaternary structure, homodimer. Requires NH4(+) as cofactor. The cofactor is K(+).

The protein localises to the cytoplasm. The catalysed reaction is (R)-pantothenate + ATP = (R)-4'-phosphopantothenate + ADP + H(+). It participates in cofactor biosynthesis; coenzyme A biosynthesis; CoA from (R)-pantothenate: step 1/5. Functionally, catalyzes the phosphorylation of pantothenate (Pan), the first step in CoA biosynthesis. This chain is Type III pantothenate kinase, found in Methylacidiphilum infernorum (isolate V4) (Methylokorus infernorum (strain V4)).